Here is a 431-residue protein sequence, read N- to C-terminus: Adenylosuccinate synthetase (431 aa).

Residues 13–19 and 41–43 each bind GTP; these read GDEGKGK and GHT. Asp14 acts as the Proton acceptor in catalysis. 2 residues coordinate Mg(2+): Asp14 and Gly41. Residues 14 to 17, 39 to 42, Thr130, Arg144, Gln225, Thr240, and Arg304 contribute to the IMP site; these read DEGK and NAGH. His42 serves as the catalytic Proton donor. Residue 300 to 306 coordinates substrate; it reads ATTGRKR. GTP is bound by residues Arg306, 332–334, and 415–417; these read KLD and STG.

It belongs to the adenylosuccinate synthetase family. As to quaternary structure, homodimer. It depends on Mg(2+) as a cofactor.

Its subcellular location is the cytoplasm. It catalyses the reaction IMP + L-aspartate + GTP = N(6)-(1,2-dicarboxyethyl)-AMP + GDP + phosphate + 2 H(+). It participates in purine metabolism; AMP biosynthesis via de novo pathway; AMP from IMP: step 1/2. Its function is as follows. Plays an important role in the de novo pathway of purine nucleotide biosynthesis. Catalyzes the first committed step in the biosynthesis of AMP from IMP. The chain is Adenylosuccinate synthetase from Shewanella denitrificans (strain OS217 / ATCC BAA-1090 / DSM 15013).